A 141-amino-acid polypeptide reads, in one-letter code: Small ribosomal subunit protein uS8c (141 aa).

Belongs to the universal ribosomal protein uS8 family. Part of the 30S ribosomal subunit.

The protein resides in the plastid. Its subcellular location is the chloroplast. One of the primary rRNA binding proteins, it binds directly to 16S rRNA central domain where it helps coordinate assembly of the platform of the 30S subunit. The sequence is that of Small ribosomal subunit protein uS8c (rps8) from Chlamydomonas reinhardtii (Chlamydomonas smithii).